The sequence spans 239 residues: MADS-box transcription factor 34 (239 aa).

The 61-residue stretch at 1-61 (MGRGKVVLQR…GRLYQFSSSS (61 aa)) folds into the MADS-box domain. One can recognise a K-box domain in the interval 88–178 (MQNNYQEYVN…KRKLDEIDVE (91 aa)). A disordered region spans residues 179–208 (AAPPQPPWNGNCSNGHGGGGGVFSSEPPQP).

Highly expressed in leaves and at low levels in roots and spikelets (rice flower).

The protein resides in the nucleus. Probable transcription factor. The protein is MADS-box transcription factor 34 (MADS34) of Oryza sativa subsp. japonica (Rice).